The sequence spans 284 residues: ATP phosphoribosyltransferase (284 aa).

The protein belongs to the ATP phosphoribosyltransferase family. Long subfamily. It depends on Mg(2+) as a cofactor.

The protein localises to the cytoplasm. It catalyses the reaction 1-(5-phospho-beta-D-ribosyl)-ATP + diphosphate = 5-phospho-alpha-D-ribose 1-diphosphate + ATP. Its pathway is amino-acid biosynthesis; L-histidine biosynthesis; L-histidine from 5-phospho-alpha-D-ribose 1-diphosphate: step 1/9. With respect to regulation, feedback inhibited by histidine. In terms of biological role, catalyzes the condensation of ATP and 5-phosphoribose 1-diphosphate to form N'-(5'-phosphoribosyl)-ATP (PR-ATP). Has a crucial role in the pathway because the rate of histidine biosynthesis seems to be controlled primarily by regulation of HisG enzymatic activity. This Corynebacterium kroppenstedtii (strain DSM 44385 / JCM 11950 / CIP 105744 / CCUG 35717) protein is ATP phosphoribosyltransferase.